The primary structure comprises 405 residues: Probable dual specificity protein kinase YAK1 homolog (405 aa).

In terms of domain architecture, Protein kinase spans 40–335; that stretch reads YMIIDMLGTG…AKSLASHSYL (296 aa). ATP-binding positions include 46 to 54 and K68; that span reads LGTGTFGQV. The Proton acceptor role is filled by D163.

It belongs to the protein kinase superfamily. CMGC Ser/Thr protein kinase family. MNB/DYRK subfamily.

The protein localises to the cytoplasm. The protein resides in the nucleus. The catalysed reaction is L-seryl-[protein] + ATP = O-phospho-L-seryl-[protein] + ADP + H(+). It carries out the reaction L-threonyl-[protein] + ATP = O-phospho-L-threonyl-[protein] + ADP + H(+). It catalyses the reaction L-tyrosyl-[protein] + ATP = O-phospho-L-tyrosyl-[protein] + ADP + H(+). Its function is as follows. Negative regulator of the cell cycle acting downstream of the cAMP-dependent protein kinase. Part of a glucose-sensing system involved in growth control in response to glucose availability. This is Probable dual specificity protein kinase YAK1 homolog (YAK1) from Encephalitozoon cuniculi (strain GB-M1) (Microsporidian parasite).